We begin with the raw amino-acid sequence, 1756 residues long: Transposon Ty1-BR Gag-Pol polyprotein (1756 aa).

3 stretches are compositionally biased toward polar residues: residues 1 to 10 (MESQQLSNYP), 48 to 60 (TKAN…TPAS), and 127 to 152 (QSQF…GNTF). Disordered stretches follow at residues 1–93 (MESQ…MMTQ), 126–173 (PQSQ…RPPP), and 352–421 (GSRN…SKST). Over residues 153-165 (TDSSSADSDMTST) the composition is skewed to low complexity. Residues 299–401 (NNGIHINNKV…NSKSKTARAH (103 aa)) are RNA-binding. The span at 402–418 (NVSTSNNSPSTDNDSIS) shows a compositional bias: low complexity. Phosphoserine is present on serine 416. The For protease activity; shared with dimeric partner role is filled by aspartate 461. The segment at 583–640 (NVHTSESTRKYPYPFIHRMLAHANAQTIRYSLKNNTITYFNESDVDWSSAIDYQCPDC) is integrase-type zinc finger-like. Residues 660 to 835 (NSYEPFQYLH…AGLDISTLLP (176 aa)) form the Integrase catalytic domain. Aspartate 671 and aspartate 736 together coordinate Mg(2+). Disordered regions lie at residues 956 to 1088 (SKAV…TEKR) and 1142 to 1173 (PTEL…SNAY). The span at 960-969 (SPTDSTPPST) shows a compositional bias: low complexity. Composition is skewed to polar residues over residues 1005-1017 (STPQ…STDS) and 1031-1043 (MSQS…SYAS). Residues 1044 to 1053 (KSKDFRHSDS) show a composition bias toward basic and acidic residues. Residues 1054–1082 (YSDNETNHTNVPISSTGGTNNKTVPQTSE) are compositionally biased toward polar residues. A Bipartite nuclear localization signal motif is present at residues 1179 to 1213 (KKRSLEDNETEIKVSRDTWNTKNMRSLEPPRSKKR). One can recognise a Reverse transcriptase Ty1/copia-type domain in the interval 1339-1477 (NNYYITQLDI…DILGLEIKYQ (139 aa)). 6 residues coordinate Mg(2+): aspartate 1347, aspartate 1428, aspartate 1429, aspartate 1611, glutamate 1653, and aspartate 1686. The RNase H Ty1/copia-type domain maps to 1611–1753 (DASYGNQPYY…IKTFKLLTNK (143 aa)).

The capsid protein forms a homotrimer, from which the VLPs are assembled. The protease is a homodimer, whose active site consists of two apposed aspartic acid residues. Post-translationally, initially, virus-like particles (VLPs) are composed of the structural unprocessed proteins Gag and Gag-Pol, and also contain the host initiator methionine tRNA (tRNA(i)-Met) which serves as a primer for minus-strand DNA synthesis, and a dimer of genomic Ty RNA. Processing of the polyproteins occurs within the particle and proceeds by an ordered pathway, called maturation. First, the protease (PR) is released by autocatalytic cleavage of the Gag-Pol polyprotein yielding capsid protein p45 and a Pol-p154 precursor protein. This cleavage is a prerequisite for subsequent processing of Pol-p154 at the remaining sites to release the mature structural and catalytic proteins. Maturation takes place prior to the RT reaction and is required to produce transposition-competent VLPs.

The protein localises to the cytoplasm. The protein resides in the nucleus. The enzyme catalyses DNA(n) + a 2'-deoxyribonucleoside 5'-triphosphate = DNA(n+1) + diphosphate. The catalysed reaction is Endonucleolytic cleavage to 5'-phosphomonoester.. In terms of biological role, capsid protein (CA) is the structural component of the virus-like particle (VLP), forming the shell that encapsulates the retrotransposons dimeric RNA genome. The particles are assembled from trimer-clustered units and there are holes in the capsid shells that allow for the diffusion of macromolecules. CA also has nucleocapsid-like chaperone activity, promoting primer tRNA(i)-Met annealing to the multipartite primer-binding site (PBS), dimerization of Ty1 RNA and initiation of reverse transcription. The aspartyl protease (PR) mediates the proteolytic cleavages of the Gag and Gag-Pol polyproteins after assembly of the VLP. Its function is as follows. Reverse transcriptase/ribonuclease H (RT) is a multifunctional enzyme that catalyzes the conversion of the retro-elements RNA genome into dsDNA within the VLP. The enzyme displays a DNA polymerase activity that can copy either DNA or RNA templates, and a ribonuclease H (RNase H) activity that cleaves the RNA strand of RNA-DNA heteroduplexes during plus-strand synthesis and hydrolyzes RNA primers. The conversion leads to a linear dsDNA copy of the retrotransposon that includes long terminal repeats (LTRs) at both ends. Functionally, integrase (IN) targets the VLP to the nucleus, where a subparticle preintegration complex (PIC) containing at least integrase and the newly synthesized dsDNA copy of the retrotransposon must transit the nuclear membrane. Once in the nucleus, integrase performs the integration of the dsDNA into the host genome. This is Transposon Ty1-BR Gag-Pol polyprotein (TY1B-BR) from Saccharomyces cerevisiae (strain ATCC 204508 / S288c) (Baker's yeast).